The primary structure comprises 182 residues: Large ribosomal subunit protein uL22 (182 aa).

The segment at 159–182 (AAAKPKATAKKATGEKSKAKTKAN) is disordered.

This sequence belongs to the universal ribosomal protein uL22 family. As to quaternary structure, part of the 50S ribosomal subunit.

This protein binds specifically to 23S rRNA; its binding is stimulated by other ribosomal proteins, e.g. L4, L17, and L20. It is important during the early stages of 50S assembly. It makes multiple contacts with different domains of the 23S rRNA in the assembled 50S subunit and ribosome. Its function is as follows. The globular domain of the protein is located near the polypeptide exit tunnel on the outside of the subunit, while an extended beta-hairpin is found that lines the wall of the exit tunnel in the center of the 70S ribosome. This is Large ribosomal subunit protein uL22 from Cytophaga hutchinsonii (strain ATCC 33406 / DSM 1761 / CIP 103989 / NBRC 15051 / NCIMB 9469 / D465).